The sequence spans 304 residues: Murein tetrapeptide carboxypeptidase (304 aa).

The active-site Nucleophile is the Ser-106. Active-site charge relay system residues include Glu-200 and His-270.

The protein belongs to the peptidase S66 family.

It is found in the cytoplasm. It carries out the reaction N-acetyl-D-glucosaminyl-N-acetylmuramoyl-L-alanyl-meso-2,6-diaminoheptanedioyl-D-alanine + H2O = N-acetyl-D-glucosaminyl-N-acetylmuramoyl-L-alanyl-meso-2,6-diaminoheptanedioate + D-alanine. It participates in cell wall biogenesis; peptidoglycan recycling. In terms of biological role, releases the terminal D-alanine residue from the cytoplasmic tetrapeptide recycling product L-Ala-gamma-D-Glu-meso-Dap-D-Ala. Can also cleave D-Ala from murein derivatives containing the tetrapeptide, i.e. MurNAc-tetrapeptide, UDP-MurNAc-tetrapeptide, GlcNAc-MurNAc-tetrapeptide, and GlcNAc-anhMurNAc-tetrapeptide. Does not act on murein sacculi or cross-linked muropeptides. The tripeptides produced by the LcdA reaction can then be reused as peptidoglycan building blocks; LcdA is thereby involved in murein recycling. In Escherichia coli O6:H1 (strain CFT073 / ATCC 700928 / UPEC), this protein is Murein tetrapeptide carboxypeptidase (ldcA).